A 108-amino-acid chain; its full sequence is Pyrimidine/purine nucleoside phosphorylase (108 aa).

It belongs to the nucleoside phosphorylase PpnP family.

It carries out the reaction a purine D-ribonucleoside + phosphate = a purine nucleobase + alpha-D-ribose 1-phosphate. The catalysed reaction is adenosine + phosphate = alpha-D-ribose 1-phosphate + adenine. It catalyses the reaction cytidine + phosphate = cytosine + alpha-D-ribose 1-phosphate. The enzyme catalyses guanosine + phosphate = alpha-D-ribose 1-phosphate + guanine. It carries out the reaction inosine + phosphate = alpha-D-ribose 1-phosphate + hypoxanthine. The catalysed reaction is thymidine + phosphate = 2-deoxy-alpha-D-ribose 1-phosphate + thymine. It catalyses the reaction uridine + phosphate = alpha-D-ribose 1-phosphate + uracil. The enzyme catalyses xanthosine + phosphate = alpha-D-ribose 1-phosphate + xanthine. Catalyzes the phosphorolysis of diverse nucleosides, yielding D-ribose 1-phosphate and the respective free bases. Can use uridine, adenosine, guanosine, cytidine, thymidine, inosine and xanthosine as substrates. Also catalyzes the reverse reactions. This Acinetobacter baumannii (strain AB307-0294) protein is Pyrimidine/purine nucleoside phosphorylase.